The primary structure comprises 45 residues: Large ribosomal subunit protein bL34 (45 aa).

Polar residues predominate over residues 1–10 (MTQRTLGGTN). Residues 1-45 (MTQRTLGGTNRKQKRTSGFRARMRTHNGRKVIQARRSKGRHRLAV) are disordered. A compositionally biased stretch (basic residues) spans 11–45 (RKQKRTSGFRARMRTHNGRKVIQARRSKGRHRLAV).

Belongs to the bacterial ribosomal protein bL34 family.

In Synechocystis sp. (strain ATCC 27184 / PCC 6803 / Kazusa), this protein is Large ribosomal subunit protein bL34 (rpmH).